Reading from the N-terminus, the 831-residue chain is Translation initiation factor IF-2 (831 aa).

The region spanning 329–499 (TRAPVVTVMG…LLIAEMQDLK (171 aa)) is the tr-type G domain. Positions 338-345 (GHVDHGKT) are G1. Position 338-345 (338-345 (GHVDHGKT)) interacts with GTP. Residues 363-367 (GITQH) form a G2 region. The tract at residues 385–388 (DTPG) is G3. GTP-binding positions include 385-389 (DTPGH) and 439-442 (NKID). Residues 439–442 (NKID) form a G4 region. The G5 stretch occupies residues 475–477 (SAL).

Belongs to the TRAFAC class translation factor GTPase superfamily. Classic translation factor GTPase family. IF-2 subfamily.

The protein resides in the cytoplasm. One of the essential components for the initiation of protein synthesis. Protects formylmethionyl-tRNA from spontaneous hydrolysis and promotes its binding to the 30S ribosomal subunits. Also involved in the hydrolysis of GTP during the formation of the 70S ribosomal complex. This Rickettsia rickettsii (strain Iowa) protein is Translation initiation factor IF-2.